Reading from the N-terminus, the 486-residue chain is Kynurenine 3-monooxygenase (486 aa).

Residues valine 19, 37–40 (YEAR), and alanine 57 each bind FAD. Residues arginine 85 and tyrosine 99 each contribute to the L-kynurenine site. Residues arginine 111, leucine 136, threonine 172, aspartate 304, and 317–318 (MN) contribute to the FAD site. L-kynurenine contacts are provided by asparagine 363 and tyrosine 398. The next 2 membrane-spanning stretches (helical) occupy residues 385 to 404 (FLHA…VTFS) and 425 to 445 (GLFF…IHYM). N-linked (GlcNAc...) asparagine glycosylation occurs at asparagine 465.

It belongs to the aromatic-ring hydroxylase family. KMO subfamily. FAD serves as cofactor. Highest levels in placenta and liver. Detectable in kidney.

It localises to the mitochondrion outer membrane. It carries out the reaction L-kynurenine + NADPH + O2 + H(+) = 3-hydroxy-L-kynurenine + NADP(+) + H2O. It functions in the pathway cofactor biosynthesis; NAD(+) biosynthesis; quinolinate from L-kynurenine: step 1/3. In terms of biological role, catalyzes the hydroxylation of L-kynurenine (L-Kyn) to form 3-hydroxy-L-kynurenine (L-3OHKyn). Required for synthesis of quinolinic acid, a neurotoxic NMDA receptor antagonist and potential endogenous inhibitor of NMDA receptor signaling in axonal targeting, synaptogenesis and apoptosis during brain development. Quinolinic acid may also affect NMDA receptor signaling in pancreatic beta cells, osteoblasts, myocardial cells, and the gastrointestinal tract. The protein is Kynurenine 3-monooxygenase of Homo sapiens (Human).